The primary structure comprises 598 residues: Arginine--tRNA ligase (598 aa).

The 'HIGH' region motif lies at 135-145; sequence ANPTGPIHIGG. The tract at residues 229–248 is disordered; sequence VDGGTDEKGEPLGEGDSEQR. The span at 231–248 shows a compositional bias: basic and acidic residues; the sequence is GGTDEKGEPLGEGDSEQR.

The protein belongs to the class-I aminoacyl-tRNA synthetase family. As to quaternary structure, monomer.

The protein resides in the cytoplasm. The catalysed reaction is tRNA(Arg) + L-arginine + ATP = L-arginyl-tRNA(Arg) + AMP + diphosphate. This Bifidobacterium animalis subsp. lactis (strain AD011) protein is Arginine--tRNA ligase.